Here is a 299-residue protein sequence, read N- to C-terminus: Nucleoporin POM34 (299 aa).

The segment at 1–39 (MKIQAGQLGLDDNDVPGPLPDTDSKPSSQSQNDTPMFKL) is disordered. The span at 25 to 34 (KPSSQSQNDT) shows a compositional bias: polar residues. The next 2 helical transmembrane spans lie at 64–84 (IMTN…IKFF) and 133–153 (LFHL…LSTV). At Ser270 the chain carries Phosphoserine. At Thr273 the chain carries Phosphothreonine. Phosphoserine is present on residues Ser292 and Ser294.

In terms of assembly, component of the nuclear pore complex (NPC). NPC constitutes the exclusive means of nucleocytoplasmic transport. NPCs allow the passive diffusion of ions and small molecules and the active, nuclear transport receptor-mediated bidirectional transport of macromolecules such as proteins, RNAs, ribonucleoparticles (RNPs), and ribosomal subunits across the nuclear envelope. Due to its 8-fold rotational symmetry, all subunits are present with 8 copies or multiples thereof.

It is found in the nucleus. Its subcellular location is the nuclear pore complex. The protein resides in the nucleus membrane. In terms of biological role, functions as a component of the nuclear pore complex (NPC). NPC components, collectively referred to as nucleoporins (NUPs), can play the role of both NPC structural components and of docking or interaction partners for transiently associated nuclear transport factors. In Saccharomyces cerevisiae (strain ATCC 204508 / S288c) (Baker's yeast), this protein is Nucleoporin POM34 (POM34).